A 177-amino-acid chain; its full sequence is MSRVAKRPVKVPSGVEVKLDGQDVKVKGPKGELAWTVHDWVAVEQADGELRVQAQLDDRRAVALAGTTRALLNNMVTGVSQGFERKLELRGVGYRAQVQGKNLNLTLGFSHPVDYPVPEGITIEAPSQTEIVVKGADKQQVGEVAAQIRAFRPPEPYKGKGVRYADERVVLKEAKKK.

This sequence belongs to the universal ribosomal protein uL6 family. In terms of assembly, part of the 50S ribosomal subunit.

In terms of biological role, this protein binds to the 23S rRNA, and is important in its secondary structure. It is located near the subunit interface in the base of the L7/L12 stalk, and near the tRNA binding site of the peptidyltransferase center. The sequence is that of Large ribosomal subunit protein uL6 from Alkalilimnicola ehrlichii (strain ATCC BAA-1101 / DSM 17681 / MLHE-1).